The following is a 303-amino-acid chain: MNAMHNAPASDPSLVYPSPLKEFWQSFAHNKGALGGLLFMLLIVFCALFAPWVAPYDPSEQFRDFLLTPPSWLEGGQARFLLGTDELGRDLLSRLIHGARLSLLIGLSSVVISLIPGILLGLLAGFSPNRAGPLIMRLMDIMLALPSLLLAVAIVAILGPGLINTVIAIAIVSLPAYVRLTRAAVMTELNRDYVTASRLAGAGTLRLMFVCVLPNCMAPLIVQATLSFSSAILDAAALGFLGLGVQPPTPEWGTMLASARDYIERAWWVVSLPGLTILLSVLAINLMGDGLRDALDPKLKNAA.

A run of 7 helical transmembrane segments spans residues 33 to 53 (ALGG…APWV), 103 to 123 (LLIG…LGLL), 131 to 151 (AGPL…LLLA), 152 to 172 (VAIV…IAIV), 202 to 222 (AGTL…PLIV), 225 to 245 (TLSF…GLGV), and 267 to 287 (WWVV…INLM). The 190-residue stretch at 99–288 (ARLSLLIGLS…LSVLAINLMG (190 aa)) folds into the ABC transmembrane type-1 domain.

This sequence belongs to the binding-protein-dependent transport system permease family. OppBC subfamily. As to quaternary structure, the complex is composed of two ATP-binding proteins (DppD and DppF), two transmembrane proteins (DppB and DppC) and a solute-binding protein (DppA1-A5). Five orthologous SBPs (DppA1-A5) are present in P.aeruginosa, which increases the substrate specificity of the DppBCDF transporter.

It is found in the cell inner membrane. Its function is as follows. Part of the ABC transporter DppABCDF involved in the uptake of various di/tripeptides. Is also involved in the uptake of phaseolotoxin, a toxic tripeptide inhibiting the enzyme ornithine carbamoyltransferase. Responsible for the translocation of the substrate across the membrane. The chain is Di/tripeptide transport system permease protein DppC from Pseudomonas aeruginosa (strain UCBPP-PA14).